Reading from the N-terminus, the 550-residue chain is Glucose-6-phosphate isomerase (550 aa).

The active-site Proton donor is Glu357. Active-site residues include His388 and Lys516.

It belongs to the GPI family.

The protein resides in the cytoplasm. It catalyses the reaction alpha-D-glucose 6-phosphate = beta-D-fructose 6-phosphate. The protein operates within carbohydrate biosynthesis; gluconeogenesis. Its pathway is carbohydrate degradation; glycolysis; D-glyceraldehyde 3-phosphate and glycerone phosphate from D-glucose: step 2/4. Functionally, catalyzes the reversible isomerization of glucose-6-phosphate to fructose-6-phosphate. The sequence is that of Glucose-6-phosphate isomerase from Psychromonas ingrahamii (strain DSM 17664 / CCUG 51855 / 37).